Consider the following 499-residue polypeptide: Glycerol kinase (499 aa).

T12 contributes to the ADP binding site. ATP-binding residues include T12, T13, and S14. A sn-glycerol 3-phosphate-binding site is contributed by T12. Residue R16 participates in ADP binding. 4 residues coordinate sn-glycerol 3-phosphate: R82, E83, Y134, and D245. R82, E83, Y134, D245, and Q246 together coordinate glycerol. Residues T267 and G311 each contribute to the ADP site. 4 residues coordinate ATP: T267, G311, Q315, and G412. 2 residues coordinate ADP: G412 and N416.

Belongs to the FGGY kinase family.

The catalysed reaction is glycerol + ATP = sn-glycerol 3-phosphate + ADP + H(+). Its pathway is polyol metabolism; glycerol degradation via glycerol kinase pathway; sn-glycerol 3-phosphate from glycerol: step 1/1. Inhibited by fructose 1,6-bisphosphate (FBP). Key enzyme in the regulation of glycerol uptake and metabolism. Catalyzes the phosphorylation of glycerol to yield sn-glycerol 3-phosphate. In Brucella anthropi (strain ATCC 49188 / DSM 6882 / CCUG 24695 / JCM 21032 / LMG 3331 / NBRC 15819 / NCTC 12168 / Alc 37) (Ochrobactrum anthropi), this protein is Glycerol kinase.